The sequence spans 285 residues: tRNA (adenine(58)-N(1))-methyltransferase catalytic subunit TRMT61A (285 aa).

An N-acetylserine modification is found at serine 2. Substrate regions lie at residues 20–22 (LGH), 35–42 (QTQTRHGV), 64–65 (GW), 85–89 (QILYS), and 110–117 (SGTGSGSV). S-adenosyl-L-methionine-binding positions include leucine 87, 114 to 116 (SGS), glutamate 135, arginine 140, 163 to 164 (DV), and aspartate 181. Substrate regions lie at residues 180 to 183 (LDIP) and 205 to 212 (SFSPCIEQ). Threonine 274 contacts substrate.

This sequence belongs to the class I-like SAM-binding methyltransferase superfamily. TRM61 family. Heterotetramer; composed of two copies of TRMT6 and two copies of TRMT61A.

The protein resides in the nucleus. It carries out the reaction adenosine(58) in tRNA + S-adenosyl-L-methionine = N(1)-methyladenosine(58) in tRNA + S-adenosyl-L-homocysteine + H(+). It catalyses the reaction an adenosine in mRNA + S-adenosyl-L-methionine = an N(1)-methyladenosine in mRNA + S-adenosyl-L-homocysteine + H(+). Functionally, catalytic subunit of tRNA (adenine-N(1)-)-methyltransferase, which catalyzes the formation of N(1)-methyladenine at position 58 (m1A58) in initiator methionyl-tRNA. Catalytic subunit of mRNA N(1)-methyltransferase complex, which mediates methylation of adenosine residues at the N(1) position of a small subset of mRNAs: N(1) methylation takes place in tRNA T-loop-like structures of mRNAs and is only present at low stoichiometries. The protein is tRNA (adenine(58)-N(1))-methyltransferase catalytic subunit TRMT61A (TRMT61A) of Bos taurus (Bovine).